Consider the following 228-residue polypeptide: Ribose-5-phosphate isomerase A (228 aa).

Residues Thr-29 to Thr-32, Asp-85 to Asp-88, and Lys-98 to Gly-101 each bind substrate. Glu-107 serves as the catalytic Proton acceptor. Substrate is bound at residue Lys-125.

It belongs to the ribose 5-phosphate isomerase family. As to quaternary structure, homodimer.

It catalyses the reaction aldehydo-D-ribose 5-phosphate = D-ribulose 5-phosphate. It participates in carbohydrate degradation; pentose phosphate pathway; D-ribose 5-phosphate from D-ribulose 5-phosphate (non-oxidative stage): step 1/1. Functionally, catalyzes the reversible conversion of ribose-5-phosphate to ribulose 5-phosphate. This chain is Ribose-5-phosphate isomerase A, found in Staphylococcus aureus (strain Mu50 / ATCC 700699).